A 213-amino-acid polypeptide reads, in one-letter code: Ribosome maturation factor RimM (213 aa).

The PRC barrel domain occupies 99–175 (DQDAAYISDL…RITMRLPEGL (77 aa)). The segment at 182-213 (TATAREPRARRTRKRGLRKPITGADATPPDSQ) is disordered. Residues 189 to 199 (RARRTRKRGLR) are compositionally biased toward basic residues.

The protein belongs to the RimM family. In terms of assembly, binds ribosomal protein uS19.

It is found in the cytoplasm. Functionally, an accessory protein needed during the final step in the assembly of 30S ribosomal subunit, possibly for assembly of the head region. Essential for efficient processing of 16S rRNA. May be needed both before and after RbfA during the maturation of 16S rRNA. It has affinity for free ribosomal 30S subunits but not for 70S ribosomes. The chain is Ribosome maturation factor RimM from Acidobacterium capsulatum (strain ATCC 51196 / DSM 11244 / BCRC 80197 / JCM 7670 / NBRC 15755 / NCIMB 13165 / 161).